The primary structure comprises 276 residues: 3-methyl-2-oxobutanoate hydroxymethyltransferase (276 aa).

Mg(2+) contacts are provided by aspartate 45 and aspartate 84. Residues 45 to 46 (DS), aspartate 84, and lysine 114 each bind 3-methyl-2-oxobutanoate. Glutamate 116 is a Mg(2+) binding site. Residue glutamate 183 is the Proton acceptor of the active site.

The protein belongs to the PanB family. As to quaternary structure, homodecamer; pentamer of dimers. The cofactor is Mg(2+).

It is found in the cytoplasm. The catalysed reaction is 3-methyl-2-oxobutanoate + (6R)-5,10-methylene-5,6,7,8-tetrahydrofolate + H2O = 2-dehydropantoate + (6S)-5,6,7,8-tetrahydrofolate. Its pathway is cofactor biosynthesis; (R)-pantothenate biosynthesis; (R)-pantoate from 3-methyl-2-oxobutanoate: step 1/2. In terms of biological role, catalyzes the reversible reaction in which hydroxymethyl group from 5,10-methylenetetrahydrofolate is transferred onto alpha-ketoisovalerate to form ketopantoate. This is 3-methyl-2-oxobutanoate hydroxymethyltransferase from Syntrophomonas wolfei subsp. wolfei (strain DSM 2245B / Goettingen).